A 197-amino-acid polypeptide reads, in one-letter code: ATP synthase protein MI25 (197 aa).

Residues 30-50 (ISIYNEEMIVARCFIGFLIFS) form a helical membrane-spanning segment.

It belongs to the ATPase protein MI25 family. F-type ATPases have 2 components, CF(1) - the catalytic core - and CF(0) - the membrane proton channel. CF(1) has five subunits: alpha(3), beta(3), gamma(1), delta(1), epsilon(1). CF(0) has three main subunits: a, b and c.

The protein localises to the mitochondrion membrane. Functionally, this is one of the chains of the nonenzymatic component (CF(0) subunit) of the mitochondrial ATPase complex. The sequence is that of ATP synthase protein MI25 from Oryza sativa subsp. indica (Rice).